Consider the following 659-residue polypeptide: Checkpoint protein RAD24 (659 aa).

Residues 24–54 (TKWSSSRPTSPVRKARSTENDFLSKQDTSSI) form a disordered region. ATP is bound at residue 109 to 116 (GPSGCSKS). Positions 596-612 (EDEETSFNDDPIVDSDS) are enriched in acidic residues. The disordered stretch occupies residues 596-659 (EDEETSFNDD…SLSDSDLEIL (64 aa)). Phosphoserine is present on residues serine 652 and serine 654.

The protein belongs to the rad17/RAD24 family. Component of the RAD24-RFC complex which consists of RAD14, RFC2, RFC3, RFC4 and RFC5 and associates with the checkpoint clamp DDC1:MEC3:RAD17 complex. RAD24 interacts with ECO1.

The protein localises to the nucleus. In terms of biological role, participates in checkpoint pathways arrest of the cell cycle, a mechanism that allows the DNA repair pathways to act to restore the integrity of the DNA prior to DNA synthesis or separation of the replicated chromosomes. Regulates the DNA damage checkpoint pathway throughout the cell cycle, when associated with RCF5. Component of the RFC-like RAD24-RFC complex which loads the checkpoint clamp DDC1:MEC3:RAD17 complex and is involved in DNA repair pathways. During a clamp loading circle, the RFC:clamp complex binds to DNA and the recognition of the double-stranded/single-stranded junction stimulates ATP hydrolysis by RFC. The complex presumably provides bipartite ATP sites in which one subunit supplies a catalytic site for hydrolysis of ATP bound to the neighboring subunit. Dissociation of RFC from the clamp leaves the clamp encircling DNA. This chain is Checkpoint protein RAD24 (RAD24), found in Saccharomyces cerevisiae (strain ATCC 204508 / S288c) (Baker's yeast).